The chain runs to 262 residues: Pyridoxine 5'-phosphate synthase (262 aa).

3-amino-2-oxopropyl phosphate is bound at residue asparagine 6. 8–9 is a 1-deoxy-D-xylulose 5-phosphate binding site; the sequence is DH. Residue arginine 17 coordinates 3-amino-2-oxopropyl phosphate. Histidine 43 (proton acceptor) is an active-site residue. Positions 45 and 50 each coordinate 1-deoxy-D-xylulose 5-phosphate. The Proton acceptor role is filled by glutamate 70. Threonine 102 provides a ligand contact to 1-deoxy-D-xylulose 5-phosphate. Histidine 215 acts as the Proton donor in catalysis. Residues glycine 216 and 237–238 each bind 3-amino-2-oxopropyl phosphate; that span reads GH.

The protein belongs to the PNP synthase family. Homooctamer; tetramer of dimers.

It is found in the cytoplasm. It catalyses the reaction 3-amino-2-oxopropyl phosphate + 1-deoxy-D-xylulose 5-phosphate = pyridoxine 5'-phosphate + phosphate + 2 H2O + H(+). The protein operates within cofactor biosynthesis; pyridoxine 5'-phosphate biosynthesis; pyridoxine 5'-phosphate from D-erythrose 4-phosphate: step 5/5. In terms of biological role, catalyzes the complicated ring closure reaction between the two acyclic compounds 1-deoxy-D-xylulose-5-phosphate (DXP) and 3-amino-2-oxopropyl phosphate (1-amino-acetone-3-phosphate or AAP) to form pyridoxine 5'-phosphate (PNP) and inorganic phosphate. In Helicobacter pylori (strain HPAG1), this protein is Pyridoxine 5'-phosphate synthase.